The sequence spans 441 residues: Monodehydroascorbate reductase 3 (441 aa).

FAD is bound by residues Gly14–Ala17, Glu41, Arg48, Lys53, Ile96, and Arg147–Glu148. Residues Gly173–Glu179, Glu197, Arg203, and Gly262 contribute to the NAD(+) site. Residue Phe175–Glu179 coordinates NADP(+). NADP(+) contacts are provided by Arg203 and Gly262. Asp299 is an FAD binding site. An NAD(+)-binding site is contributed by Glu315–His316. Glu315–His316 contributes to the NADP(+) binding site. Arg321 lines the L-ascorbate pocket. Residue Tyr350 participates in FAD binding. Tyr350 provides a ligand contact to NAD(+). Tyr350 contacts NADP(+). L-ascorbate is bound at residue Arg352. Ser418 is modified (phosphoserine).

It belongs to the FAD-dependent oxidoreductase family. The cofactor is FAD.

Its subcellular location is the cytoplasm. The catalysed reaction is 2 monodehydro-L-ascorbate radical + NADH + H(+) = 2 L-ascorbate + NAD(+). Catalyzes the conversion of monodehydroascorbate to ascorbate, oxidizing NADH in the process. Required for producing sufficient ascorbate to maintain the interaction between Piriformospora indica and Arabidopsis in a mutualistic state. This chain is Monodehydroascorbate reductase 3, found in Arabidopsis thaliana (Mouse-ear cress).